The sequence spans 350 residues: Galactokinase (350 aa).

A substrate-binding site is contributed by 15–18 (EHTD). Residues S47 and 99-105 (GAGLSSS) each bind ATP. Residues S105 and E137 each contribute to the Mg(2+) site. D149 (proton acceptor) is an active-site residue. Position 198 (Y198) interacts with substrate.

This sequence belongs to the GHMP kinase family. GalK subfamily.

Its subcellular location is the cytoplasm. It catalyses the reaction alpha-D-galactose + ATP = alpha-D-galactose 1-phosphate + ADP + H(+). The protein operates within carbohydrate metabolism; galactose metabolism. Catalyzes the transfer of the gamma-phosphate of ATP to D-galactose to form alpha-D-galactose-1-phosphate (Gal-1-P). The chain is Galactokinase from Pyrococcus horikoshii (strain ATCC 700860 / DSM 12428 / JCM 9974 / NBRC 100139 / OT-3).